A 465-amino-acid polypeptide reads, in one-letter code: Cysteine--tRNA ligase (465 aa).

Residue Cys-27 coordinates Zn(2+). The 'HIGH' region motif lies at 29–39 (PTVYDDAHLGH). 3 residues coordinate Zn(2+): Cys-207, His-237, and Glu-241. A 'KMSKS' region motif is present at residues 269–273 (KMSKS). Position 272 (Lys-272) interacts with ATP.

It belongs to the class-I aminoacyl-tRNA synthetase family. As to quaternary structure, monomer. Zn(2+) serves as cofactor.

The protein localises to the cytoplasm. It catalyses the reaction tRNA(Cys) + L-cysteine + ATP = L-cysteinyl-tRNA(Cys) + AMP + diphosphate. The sequence is that of Cysteine--tRNA ligase (cysS) from Helicobacter pylori (strain J99 / ATCC 700824) (Campylobacter pylori J99).